The primary structure comprises 122 residues: Large ribosomal subunit protein uL14 (122 aa).

Belongs to the universal ribosomal protein uL14 family. In terms of assembly, part of the 50S ribosomal subunit. Forms a cluster with proteins L3 and L19. In the 70S ribosome, L14 and L19 interact and together make contacts with the 16S rRNA in bridges B5 and B8.

Functionally, binds to 23S rRNA. Forms part of two intersubunit bridges in the 70S ribosome. The sequence is that of Large ribosomal subunit protein uL14 from Ruminiclostridium cellulolyticum (strain ATCC 35319 / DSM 5812 / JCM 6584 / H10) (Clostridium cellulolyticum).